A 306-amino-acid chain; its full sequence is MSNEFITFEKISRKSWKQLHQKSKPLLTQEELTNITSLNDNIDINDVIEVYLPLIHLIQIYKIAQENLSFSKSLFLKKDIQQRPFIIGISGSVAVGKSTTSRLLQLLLARTHKTSTVELVTTDGFLYPNSTLIKNNMLNRKGFPESYNMELLLNFLDTVKGGQTASAPVYSHEIYDIVPDQQQTFTNPDFLIIEGINVFQNQQNNRLYMSDYFDFSIYIDADSHHIEQWYLERFLSLLELAKHDPANYYARYTSLPQNEAIAFAKKVWKTINLENLEKFIEPTRNRAELILHKAADHKIDEIYLKK.

Glycine 91–serine 98 is an ATP binding site.

Belongs to the prokaryotic pantothenate kinase family.

It is found in the cytoplasm. It carries out the reaction (R)-pantothenate + ATP = (R)-4'-phosphopantothenate + ADP + H(+). The protein operates within cofactor biosynthesis; coenzyme A biosynthesis; CoA from (R)-pantothenate: step 1/5. The chain is Pantothenate kinase from Streptococcus equi subsp. zooepidemicus (strain H70).